Here is a 709-residue protein sequence, read N- to C-terminus: Polyribonucleotide nucleotidyltransferase (709 aa).

Asp486 and Asp492 together coordinate Mg(2+). Residues 553–612 (PRIHTIKINADKIKDVIGKGGSVIRALTEETGTTIEIEDDGTVKIAATSGEQAKQAIARI) enclose the KH domain. The S1 motif domain occupies 622–690 (GRIYNGKVTR…RQGRIRLSMK (69 aa)). The interval 690-709 (KEAQATQQEAAETSSEDPAN) is disordered. Over residues 691–702 (EAQATQQEAAET) the composition is skewed to low complexity.

It belongs to the polyribonucleotide nucleotidyltransferase family. Component of the RNA degradosome, which is a multiprotein complex involved in RNA processing and mRNA degradation. The cofactor is Mg(2+).

It localises to the cytoplasm. It carries out the reaction RNA(n+1) + phosphate = RNA(n) + a ribonucleoside 5'-diphosphate. Functionally, involved in mRNA degradation. Catalyzes the phosphorolysis of single-stranded polyribonucleotides processively in the 3'- to 5'-direction. In Proteus mirabilis (strain HI4320), this protein is Polyribonucleotide nucleotidyltransferase.